Here is a 211-residue protein sequence, read N- to C-terminus: Imidazole glycerol phosphate synthase subunit HisH (211 aa).

In terms of domain architecture, Glutamine amidotransferase type-1 spans 1–211 (MIGIIDYGMG…VGIATGRGNG (211 aa)). Catalysis depends on Cys79, which acts as the Nucleophile. Catalysis depends on residues His186 and Glu188.

Heterodimer of HisH and HisF.

It is found in the cytoplasm. It carries out the reaction 5-[(5-phospho-1-deoxy-D-ribulos-1-ylimino)methylamino]-1-(5-phospho-beta-D-ribosyl)imidazole-4-carboxamide + L-glutamine = D-erythro-1-(imidazol-4-yl)glycerol 3-phosphate + 5-amino-1-(5-phospho-beta-D-ribosyl)imidazole-4-carboxamide + L-glutamate + H(+). The enzyme catalyses L-glutamine + H2O = L-glutamate + NH4(+). Its pathway is amino-acid biosynthesis; L-histidine biosynthesis; L-histidine from 5-phospho-alpha-D-ribose 1-diphosphate: step 5/9. Functionally, IGPS catalyzes the conversion of PRFAR and glutamine to IGP, AICAR and glutamate. The HisH subunit catalyzes the hydrolysis of glutamine to glutamate and ammonia as part of the synthesis of IGP and AICAR. The resulting ammonia molecule is channeled to the active site of HisF. The chain is Imidazole glycerol phosphate synthase subunit HisH from Geobacillus kaustophilus (strain HTA426).